A 615-amino-acid polypeptide reads, in one-letter code: Delta(14)-sterol reductase LBR (615 aa).

A Tudor domain is found at 1-62 (MPSRKFADGE…DIKPLTSFRQ (62 aa)). At 1-211 (MPSRKFADGE…IRAKDLEFGG (211 aa)) the chain is on the nuclear side. Residues 53-109 (DIKPLTSFRQRKGGSTSSSPSRRRGSRSRSRSRSPGRPPKSARRSASASHQADIKEA) form a disordered region. K55 bears the N6-acetyllysine mark. T58 bears the Phosphothreonine mark. Phosphoserine is present on residues S59 and S67. Residues S71 and S86 each carry the phosphoserine; by CDK1 modification. The span at 73-86 (SRRRGSRSRSRSRS) shows a compositional bias: basic residues. S97 and S99 each carry phosphoserine. Phosphothreonine is present on T118. S128 is modified (phosphoserine). A Phosphothreonine modification is found at T200. The next 8 membrane-spanning stretches (helical) occupy residues 212–232 (VPGV…LLLM), 258–278 (VFGV…LPIG), 299–319 (FYAF…GVEF), 326–346 (FLQF…YLYM), 415–435 (VPSL…VDAL), 447–467 (IIHD…VPFI), 481–501 (EVSW…YVIF), and 561–581 (ACGF…MLLV). 2 positions are modified to N6-acetyllysine: K594 and K601.

This sequence belongs to the ERG4/ERG24 family. As to quaternary structure, interacts with CBX5. Interacts with DNA. Interaction with DNA is sequence independent with higher affinity for supercoiled and relaxed circular DNA than linear DNA. Interacts with lamin B. Interacts with CLNK. Interacts with TMEM147; promoting LBR localization to the nucleus inner membrane. Post-translationally, phosphorylated by CDK1 in mitosis when the inner nuclear membrane breaks down into vesicles that dissociate from the lamina and the chromatin. It is phosphorylated by different protein kinases in interphase when the membrane is associated with these structures. Phosphorylation of LBR and HP1 proteins may be responsible for some of the alterations in chromatin organization and nuclear structure which occur at various times during the cell cycle. Phosphorylated by SRPK1. In late anaphase LBR is dephosphorylated, probably by PP1 and/or PP2A, allowing reassociation with chromatin.

The protein resides in the nucleus inner membrane. The protein localises to the nucleus. It is found in the cytoplasm. Its subcellular location is the endoplasmic reticulum membrane. It catalyses the reaction 5alpha-cholest-8,14-dien-3beta-ol + NADPH + H(+) = 5alpha-cholest-8-en-3beta-ol + NADP(+). It carries out the reaction 4,4-dimethyl-5alpha-cholesta-8,24-dien-3beta-ol + NADP(+) = 4,4-dimethyl-5alpha-cholesta-8,14,24-trien-3beta-ol + NADPH + H(+). The enzyme catalyses 4,4-dimethyl-8,14-cholestadien-3beta-ol + NADPH + H(+) = 4,4-dimethyl-5alpha-cholest-8-en-3beta-ol + NADP(+). The protein operates within steroid biosynthesis; cholesterol biosynthesis. Catalyzes the reduction of the C14-unsaturated bond of lanosterol, as part of the metabolic pathway leading to cholesterol biosynthesis. Plays a critical role in myeloid cell cholesterol biosynthesis which is essential to both myeloid cell growth and functional maturation. Mediates the activation of NADPH oxidases, perhaps by maintaining critical levels of cholesterol required for membrane lipid raft formation during neutrophil differentiation. Anchors the lamina and the heterochromatin to the inner nuclear membrane. The protein is Delta(14)-sterol reductase LBR (LBR) of Pongo abelii (Sumatran orangutan).